We begin with the raw amino-acid sequence, 188 residues long: HGPRTase-like protein 1 (188 aa).

This sequence belongs to the purine/pyrimidine phosphoribosyltransferase family. Archaeal HPRT subfamily.

Its function is as follows. May catalyze a purine salvage reaction, the substrate is unknown. The polypeptide is HGPRTase-like protein 1 (Haloferax volcanii (strain ATCC 29605 / DSM 3757 / JCM 8879 / NBRC 14742 / NCIMB 2012 / VKM B-1768 / DS2) (Halobacterium volcanii)).